The primary structure comprises 467 residues: Cysteine--tRNA ligase (467 aa).

Cysteine 28 contributes to the Zn(2+) binding site. A 'HIGH' region motif is present at residues 30-40; it reads MTVYDYCHLGH. Zn(2+)-binding residues include cysteine 209, histidine 234, and glutamate 238. The short motif at 266-270 is the 'KMSKS' region element; that stretch reads KMSKS. Lysine 269 serves as a coordination point for ATP.

Belongs to the class-I aminoacyl-tRNA synthetase family. In terms of assembly, monomer. It depends on Zn(2+) as a cofactor.

The protein localises to the cytoplasm. It catalyses the reaction tRNA(Cys) + L-cysteine + ATP = L-cysteinyl-tRNA(Cys) + AMP + diphosphate. The sequence is that of Cysteine--tRNA ligase from Hahella chejuensis (strain KCTC 2396).